Here is a 323-residue protein sequence, read N- to C-terminus: Calcium homeostasis modulator protein 2 (323 aa).

Topologically, residues 1–21 (MAALIAENFRFLSLFFKSKDV) are cytoplasmic. Residues 14–39 (LFFKSKDVMIFNGLVALGTVGSQELF) are central pore. The helical transmembrane segment at 22-43 (MIFNGLVALGTVGSQELFSVVA) threads the bilayer. At 44–52 (FHCPCSPAR) the chain is on the extracellular side. 2 disulfide bridges follow: Cys46–Cys130 and Cys48–Cys162. Residues 53-76 (NYLYGLAAIGVPALVLFIIGIILN) traverse the membrane as a helical segment. Over 77 to 101 (NHTWNLVAECQHRRTKNCSAAPTFL) the chain is Cytoplasmic. A helical membrane pass occupies residues 102 to 132 (LLSSILGRAAVAPVTWSVISLLRGEAYVCAL). The Extracellular portion of the chain corresponds to 133 to 179 (SEFVDPSSLTAREEHFPSAHATEILARFPCKENPDNLSDFREEVSRR). A hemichannel docking region spans residues 145–152 (EEHFPSAH). The helical transmembrane segment at 180-206 (LRYESQLFGWLLIGVVAILVFLTKCLK) threads the bilayer. The Cytoplasmic segment spans residues 207–323 (HYCSPLSYRQ…DNVEMALLPS (117 aa)). The tract at residues 214–251 (YRQEAYWAQYRANEDQLFQRTAEVHSRVLAANNVRRFF) is intersubunit interaction.

The protein belongs to the CALHM family. As to quaternary structure, homo-undecamer. Two undecameric hemichannels can assemble in a head-to-head manner to form a gap junction. As to expression, placenta.

The protein resides in the cell membrane. The catalysed reaction is ATP(in) = ATP(out). With respect to regulation, inhibited by Ca(2+) and ruthenium red in a voltage-dependent way. Pore-forming subunit of Ca(2+) homeostasis modulator channels. Mediates ATP release from astrocytes and ATP-induced Ca(2+) influx in microglia thus regulating neuronal ATP and Ca(2+) homeostasis, synaptic transmission and neuroinflammatory response. May form intercellular gap junctions. The gating mechanism remains unknown. This Homo sapiens (Human) protein is Calcium homeostasis modulator protein 2.